A 246-amino-acid chain; its full sequence is MVSLTKRCIAEFIGTFFLVFFGAGAAAITLMIASGGTAPNPFNIGIGLLGGLGDWVAIGLAFGFAIAASIYALGNISGCHINPAVTIGLWSVKKFPGRDVVPYIIAQLLGAAFASFIFLQCAGITAATIGGLGATAPFPGIGYWQAMLAETVGTFLLMITIMGIAVDERAPKGFAGIIIGLTVAGIITTIGNITGSSLNPARTFGPYLNDMVFAGTNLWNYFPIYVIGPVVGAVLAALTYQYLTSE.

At 1–11 (MVSLTKRCIAE) the chain is on the cytoplasmic side. Residues 12–32 (FIGTFFLVFFGAGAAAITLMI) traverse the membrane as a helical segment. Residues 33–45 (ASGGTAPNPFNIG) lie on the Extracellular side of the membrane. Residues 46–66 (IGLLGGLGDWVAIGLAFGFAI) traverse the membrane as a helical segment. Over 67–69 (AAS) the chain is Cytoplasmic. The helical transmembrane segment at 70-90 (IYALGNISGCHINPAVTIGLW) threads the bilayer. Residues 82 to 84 (NPA) carry the NPA 1 motif. Residues 91 to 103 (SVKKFPGRDVVPY) are Extracellular-facing. A helical membrane pass occupies residues 104–124 (IIAQLLGAAFASFIFLQCAGI). The Cytoplasmic portion of the chain corresponds to 125 to 145 (TAATIGGLGATAPFPGIGYWQ). Residues 146–166 (AMLAETVGTFLLMITIMGIAV) form a helical membrane-spanning segment. The Extracellular portion of the chain corresponds to 167-172 (DERAPK). Residues 173 to 193 (GFAGIIIGLTVAGIITTIGNI) traverse the membrane as a helical segment. Over 194 to 217 (TGSSLNPARTFGPYLNDMVFAGTN) the chain is Cytoplasmic. Positions 199-201 (NPA) match the NPA 2 motif. A helical transmembrane segment spans residues 218–238 (LWNYFPIYVIGPVVGAVLAAL). Over 239–246 (TYQYLTSE) the chain is Extracellular.

The protein belongs to the MIP/aquaporin (TC 1.A.8) family. As to quaternary structure, homotetramer.

Its subcellular location is the cell membrane. Functionally, channel that permits osmotically driven movement of water in both directions. It mediates rapid entry or exit of water in response to abrupt changes in osmolarity. Also exhibits a transient but reproducible increase in the initial glycerol flux. This chain is Aquaporin AqpM (aqpM), found in Methanothermobacter thermautotrophicus (strain ATCC 29096 / DSM 1053 / JCM 10044 / NBRC 100330 / Delta H) (Methanobacterium thermoautotrophicum).